The sequence spans 382 residues: Alcohol dehydrogenase 1 (382 aa).

Residues Cys-49, Thr-51, His-71, Cys-101, Cys-104, Cys-107, Cys-115, and Cys-179 each contribute to the Zn(2+) site. Positions 51 and 71 each coordinate an alcohol. Thr-51 is a binding site for NAD(+). NAD(+) contacts are provided by residues 204–209 (GLGAVG), Asp-228, Arg-233, Thr-275, Val-298, 298–300 (VGV), Phe-325, and Arg-375.

This sequence belongs to the zinc-containing alcohol dehydrogenase family. In terms of assembly, homodimer. Requires Zn(2+) as cofactor.

Its subcellular location is the cytoplasm. The enzyme catalyses a primary alcohol + NAD(+) = an aldehyde + NADH + H(+). It carries out the reaction a secondary alcohol + NAD(+) = a ketone + NADH + H(+). In terms of biological role, this protein is responsible for the conversion of alcohols to aldehydes in plants and is important for NAD metabolism during anaerobic respiration. The protein is Alcohol dehydrogenase 1 (ADH1) of Petunia hybrida (Petunia).